Reading from the N-terminus, the 302-residue chain is Protein transport protein SEC13 homolog B (302 aa).

WD repeat units follow at residues 9-48 (GHEDIVHDVQMDYYGKRIATASSDCTIKITGVSNNGGSQQ), 54-95 (GHRG…QWTQ), 101-142 (DHKS…GWDT), 148-201 (AHPV…WKMD), 208-251 (KHTD…EQWE), and 257-296 (DFMTPVWRVSWSLTGNLLAVSDGNNNVTVWKEAVDGEWEQ).

This sequence belongs to the WD repeat SEC13 family. Part of the nuclear pore complex (NPC). The NPC has an eight-fold symmetrical structure comprising a central transport channel and two rings, the cytoplasmic and nuclear rings, to which eight filaments are attached. The cytoplasmic filaments have loose ends, while the nuclear filaments are joined in a distal ring, forming a nuclear basket. NPCs are highly dynamic in configuration and composition, and can be devided in 3 subcomplexes, the NUP62 subcomplex, the NUP107-160 subcomplex and the NUP93 subcomplex, containing approximately 30 different nucleoporin proteins. Interacts with MAG5, SEC31A and SEC31B.

Its subcellular location is the golgi apparatus. The protein localises to the endoplasmic reticulum. The protein resides in the nucleus envelope. It is found in the nucleus. It localises to the nuclear pore complex. In terms of biological role, required for protein transport from the endoplasmic reticulum to the Golgi apparatus. This is Protein transport protein SEC13 homolog B from Arabidopsis thaliana (Mouse-ear cress).